The sequence spans 297 residues: Golgi-associated RAB2 interactor protein 1A (297 aa).

The disordered stretch occupies residues Ser-226–Ser-257. Over residues Ala-240–Ser-257 the composition is skewed to polar residues.

Belongs to the GARIN family. Interacts (via N-terminus) with RAB2B (in GTP-bound form). In terms of tissue distribution, expressed in testis (at protein level).

The protein localises to the golgi apparatus. In terms of biological role, RAB2B effector protein required for accurate acrosome formation and normal male fertility. This Mus musculus (Mouse) protein is Golgi-associated RAB2 interactor protein 1A.